Reading from the N-terminus, the 497-residue chain is Glutamate--tRNA ligase (497 aa).

The 'HIGH' region motif lies at 13 to 23 (PSPTGTPHVGM). The 'KMSKS' region signature appears at 257–261 (KLSKR). Lysine 260 provides a ligand contact to ATP.

The protein belongs to the class-I aminoacyl-tRNA synthetase family. Glutamate--tRNA ligase type 1 subfamily. In terms of assembly, monomer.

The protein resides in the cytoplasm. It carries out the reaction tRNA(Glu) + L-glutamate + ATP = L-glutamyl-tRNA(Glu) + AMP + diphosphate. Its function is as follows. Catalyzes the attachment of glutamate to tRNA(Glu) in a two-step reaction: glutamate is first activated by ATP to form Glu-AMP and then transferred to the acceptor end of tRNA(Glu). This chain is Glutamate--tRNA ligase, found in Corynebacterium diphtheriae (strain ATCC 700971 / NCTC 13129 / Biotype gravis).